Reading from the N-terminus, the 379-residue chain is Galactose-1-phosphate uridylyltransferase (379 aa).

The tract at residues 1-21 is disordered; the sequence is MSRSGTDPQQRQQASEADAAA. The span at 9-21 shows a compositional bias: low complexity; sequence QQRQQASEADAAA. Cys75 serves as a coordination point for Zn(2+). UDP-alpha-D-glucose is bound by residues Ala81, 97–98, and Asn173; that span reads ND. Residue His184 participates in Zn(2+) binding. His186 (tele-UMP-histidine intermediate) is an active-site residue. Residue Gln188 coordinates UDP-alpha-D-glucose. Zn(2+) contacts are provided by Glu202, His301, His319, and His321. Residues 334–337 and 339–340 contribute to the UDP-alpha-D-glucose site; these read KFMV and YE.

The protein belongs to the galactose-1-phosphate uridylyltransferase type 1 family. In terms of assembly, homodimer. Requires Zn(2+) as cofactor.

It carries out the reaction alpha-D-galactose 1-phosphate + UDP-alpha-D-glucose = alpha-D-glucose 1-phosphate + UDP-alpha-D-galactose. The protein operates within carbohydrate metabolism; galactose metabolism. Functionally, plays an important role in galactose metabolism. This is Galactose-1-phosphate uridylyltransferase (GALT) from Homo sapiens (Human).